The following is a 542-amino-acid chain: CTP synthase (542 aa).

The tract at residues 1–265 is amidoligase domain; it reads MTRYVFITGG…DREILAHFQM (265 aa). Ser-13 is a CTP binding site. Ser-13 serves as a coordination point for UTP. Residues 14 to 19 and Asp-71 each bind ATP; that span reads SLGKGL. Residues Asp-71 and Glu-139 each contribute to the Mg(2+) site. Residues 146 to 148, 186 to 191, and Lys-222 each bind CTP; these read DIE and KTKPTQ. UTP is bound by residues 186–191 and Lys-222; that span reads KTKPTQ. 238–240 is an ATP binding site; that stretch reads RDV. Positions 291–541 constitute a Glutamine amidotransferase type-1 domain; sequence TIAIVGKYTG…IAAAIEQSRL (251 aa). Residue Gly-353 participates in L-glutamine binding. Catalysis depends on Cys-380, which acts as the Nucleophile; for glutamine hydrolysis. L-glutamine-binding positions include 381 to 384, Glu-404, and Arg-469; that span reads FGMQ. Active-site residues include His-514 and Glu-516.

This sequence belongs to the CTP synthase family. Homotetramer.

The enzyme catalyses UTP + L-glutamine + ATP + H2O = CTP + L-glutamate + ADP + phosphate + 2 H(+). The catalysed reaction is L-glutamine + H2O = L-glutamate + NH4(+). It catalyses the reaction UTP + NH4(+) + ATP = CTP + ADP + phosphate + 2 H(+). It participates in pyrimidine metabolism; CTP biosynthesis via de novo pathway; CTP from UDP: step 2/2. Allosterically activated by GTP, when glutamine is the substrate; GTP has no effect on the reaction when ammonia is the substrate. The allosteric effector GTP functions by stabilizing the protein conformation that binds the tetrahedral intermediate(s) formed during glutamine hydrolysis. Inhibited by the product CTP, via allosteric rather than competitive inhibition. In terms of biological role, catalyzes the ATP-dependent amination of UTP to CTP with either L-glutamine or ammonia as the source of nitrogen. Regulates intracellular CTP levels through interactions with the four ribonucleotide triphosphates. The chain is CTP synthase from Methylorubrum populi (strain ATCC BAA-705 / NCIMB 13946 / BJ001) (Methylobacterium populi).